We begin with the raw amino-acid sequence, 459 residues long: Flavin-containing monooxygenase FMO GS-OX1 (459 aa).

17–22 provides a ligand contact to FAD; it reads GAGAAG. 211 to 216 contributes to the NADP(+) binding site; it reads GNYASG.

The protein belongs to the FMO family. FAD serves as cofactor. As to expression, mainly expressed in leaves. Low levels in flowers and seeds.

The enzyme catalyses a (Z)-omega-(methylsulfanyl)-N-sulfo-alkylhydroximate S-glucoside + NADPH + O2 + H(+) = a (Z)-omega-(methylsulfinyl)-alkyl-glucosinolate + NADP(+) + H2O. In terms of biological role, catalyzes the conversion of methylthioalkyl glucosinolates into methylsulfinylalkyl glucosinolates. Able to S-oxygenate both desulfo- and intact 4-methylthiobutyl glucosinolates, but no activity with methionine, dihomomethionine or 5-methylthiopentaldoxime. In Arabidopsis thaliana (Mouse-ear cress), this protein is Flavin-containing monooxygenase FMO GS-OX1 (FMOGS-OX1).